The following is a 128-amino-acid chain: Large ribosomal subunit protein bL12 (128 aa).

The protein belongs to the bacterial ribosomal protein bL12 family. Homodimer. Part of the ribosomal stalk of the 50S ribosomal subunit. Forms a multimeric L10(L12)X complex, where L10 forms an elongated spine to which 2 to 4 L12 dimers bind in a sequential fashion. Binds GTP-bound translation factors.

In terms of biological role, forms part of the ribosomal stalk which helps the ribosome interact with GTP-bound translation factors. Is thus essential for accurate translation. This is Large ribosomal subunit protein bL12 from Corynebacterium aurimucosum (strain ATCC 700975 / DSM 44827 / CIP 107346 / CN-1) (Corynebacterium nigricans).